We begin with the raw amino-acid sequence, 73 residues long: MAKEDVIEVEGTVTEALPNTQFRVELDNGHNVLAHISGKMRMNYIRILPGDRVKVELSPYDLSRGRITYRYRS.

The 72-residue stretch at 1 to 72 (MAKEDVIEVE…SRGRITYRYR (72 aa)) folds into the S1-like domain.

This sequence belongs to the IF-1 family. Component of the 30S ribosomal translation pre-initiation complex which assembles on the 30S ribosome in the order IF-2 and IF-3, IF-1 and N-formylmethionyl-tRNA(fMet); mRNA recruitment can occur at any time during PIC assembly.

It localises to the cytoplasm. In terms of biological role, one of the essential components for the initiation of protein synthesis. Stabilizes the binding of IF-2 and IF-3 on the 30S subunit to which N-formylmethionyl-tRNA(fMet) subsequently binds. Helps modulate mRNA selection, yielding the 30S pre-initiation complex (PIC). Upon addition of the 50S ribosomal subunit IF-1, IF-2 and IF-3 are released leaving the mature 70S translation initiation complex. This Rubrobacter xylanophilus (strain DSM 9941 / JCM 11954 / NBRC 16129 / PRD-1) protein is Translation initiation factor IF-1.